A 317-amino-acid chain; its full sequence is Acetyl-coenzyme A carboxylase carboxyl transferase subunit alpha (317 aa).

The region spanning 37 to 292 (EINKKLEQTK…ADYITKGYNE (256 aa)) is the CoA carboxyltransferase C-terminal domain.

It belongs to the AccA family. Acetyl-CoA carboxylase is a heterohexamer composed of biotin carboxyl carrier protein (AccB), biotin carboxylase (AccC) and two subunits each of ACCase subunit alpha (AccA) and ACCase subunit beta (AccD).

It localises to the cytoplasm. It carries out the reaction N(6)-carboxybiotinyl-L-lysyl-[protein] + acetyl-CoA = N(6)-biotinyl-L-lysyl-[protein] + malonyl-CoA. Its pathway is lipid metabolism; malonyl-CoA biosynthesis; malonyl-CoA from acetyl-CoA: step 1/1. Functionally, component of the acetyl coenzyme A carboxylase (ACC) complex. First, biotin carboxylase catalyzes the carboxylation of biotin on its carrier protein (BCCP) and then the CO(2) group is transferred by the carboxyltransferase to acetyl-CoA to form malonyl-CoA. This chain is Acetyl-coenzyme A carboxylase carboxyl transferase subunit alpha, found in Flavobacterium johnsoniae (strain ATCC 17061 / DSM 2064 / JCM 8514 / BCRC 14874 / CCUG 350202 / NBRC 14942 / NCIMB 11054 / UW101) (Cytophaga johnsonae).